Reading from the N-terminus, the 357-residue chain is Peptide chain release factor 1 (357 aa).

Glutamine 232 carries the post-translational modification N5-methylglutamine.

Belongs to the prokaryotic/mitochondrial release factor family. Post-translationally, methylated by PrmC. Methylation increases the termination efficiency of RF1.

The protein resides in the cytoplasm. Peptide chain release factor 1 directs the termination of translation in response to the peptide chain termination codons UAG and UAA. The protein is Peptide chain release factor 1 of Nitratidesulfovibrio vulgaris (strain ATCC 29579 / DSM 644 / CCUG 34227 / NCIMB 8303 / VKM B-1760 / Hildenborough) (Desulfovibrio vulgaris).